The following is a 188-amino-acid chain: MDTGSANLTHHFLIAMPNMADPHFARTLTYIAEHSDQGALGLIINRPLDMTLETLFERVELPLEADGFAGQPVYFGGPVQTDRGFVLHRPAGDWHSTLRVNDDIALTSSRDILQSIGSSGEPQEVLISLGYAGWTAGQLEDELAQNAWLTVPADLGIIFDLPPEERLVAAMQKLGVDFAKLSEVAGHA.

The protein belongs to the UPF0301 (AlgH) family.

The chain is UPF0301 protein azo3459 from Azoarcus sp. (strain BH72).